The primary structure comprises 90 residues: Small ribosomal subunit protein bS18 (90 aa).

Belongs to the bacterial ribosomal protein bS18 family. As to quaternary structure, part of the 30S ribosomal subunit. Forms a tight heterodimer with protein bS6.

Its function is as follows. Binds as a heterodimer with protein bS6 to the central domain of the 16S rRNA, where it helps stabilize the platform of the 30S subunit. In Bordetella avium (strain 197N), this protein is Small ribosomal subunit protein bS18.